Consider the following 443-residue polypeptide: F-box/LRR-repeat protein At2g42720 (443 aa).

An F-box domain is found at 1–47 (MDRISSLPDEILEHILSFLSTKEAALTSSLSTRWKNVFVFVPSLHLD). LRR repeat units follow at residues 139–167 (KLRLGRGFTIKLCHENVYLPMLKTLCLDT), 169–194 (DFDGDHNVFETLLPRCPLLEELVLED), 201–236 (CGSVSSPSLKRLRIRFFHIPIISLDVPGLVYLELSC), 271–296 (SSHLVPADMMDLITGIRKVKVLHLTS), 323–348 (DKKQGWQILPLLIKNSPNLETLVFKG), and 363–389 (CSGILGKSSSCLSSSRVKVLEIWSYQG).

In Arabidopsis thaliana (Mouse-ear cress), this protein is F-box/LRR-repeat protein At2g42720.